Reading from the N-terminus, the 206-residue chain is Small ribosomal subunit protein uS4 (206 aa).

The S4 RNA-binding domain occupies M98–N163.

It belongs to the universal ribosomal protein uS4 family. As to quaternary structure, part of the 30S ribosomal subunit. Contacts protein S5. The interaction surface between S4 and S5 is involved in control of translational fidelity.

In terms of biological role, one of the primary rRNA binding proteins, it binds directly to 16S rRNA where it nucleates assembly of the body of the 30S subunit. Its function is as follows. With S5 and S12 plays an important role in translational accuracy. This Clostridium botulinum (strain Alaska E43 / Type E3) protein is Small ribosomal subunit protein uS4.